The chain runs to 167 residues: MKPLVGVIMGSISDWEYMKKAVEVLKEFGVPHEVKVVSAHRTPELMYEYAKTARERGIEVIIAGAGGSAHLPGMTASMTTLPVIGVPIPTKNLGGVDSLYSIVQMPAGIPVATVAIGNATNAGLLAVRILSIKYPEYAKKLDEYTEKLKEKVAKMNEELQKEVENGI.

Substrate contacts are provided by S11, D14, and R41.

It belongs to the AIR carboxylase family. Class I subfamily.

The catalysed reaction is 5-carboxyamino-1-(5-phospho-D-ribosyl)imidazole + H(+) = 5-amino-1-(5-phospho-D-ribosyl)imidazole-4-carboxylate. The protein operates within purine metabolism; IMP biosynthesis via de novo pathway; 5-amino-1-(5-phospho-D-ribosyl)imidazole-4-carboxylate from 5-amino-1-(5-phospho-D-ribosyl)imidazole (N5-CAIR route): step 2/2. Functionally, catalyzes the conversion of N5-carboxyaminoimidazole ribonucleotide (N5-CAIR) to 4-carboxy-5-aminoimidazole ribonucleotide (CAIR). The protein is N5-carboxyaminoimidazole ribonucleotide mutase of Aquifex aeolicus (strain VF5).